Here is a 661-residue protein sequence, read N- to C-terminus: Serine/threonine-protein phosphatase rdgC (661 aa).

An IQ domain is found at 7 to 32 (RAAIFIQKWYRRHQARREMQRRCNWQ). A catalytic region spans residues 105–413 (IDLLIDVFRK…HFVQYISAAS (309 aa)). Mn(2+)-binding residues include aspartate 158, histidine 160, aspartate 187, and asparagine 219. The active-site Proton donor is histidine 220. Mn(2+)-binding residues include histidine 271 and histidine 360. EF-hand domains lie at 441-476 (DHRDELEDEFRKYDPKDSGYISISHWCKVMENVTKL), 526-561 (ANKASLVAIFNIIDADNSGEITLDEFETAIDLLVAH), and 566-601 (YSKAEMLEKCRMMDLNGDGKVDLNEFLEAFRLSDLH). Residues aspartate 539, aspartate 541, serine 543, glutamate 545, glutamate 550, aspartate 579, asparagine 581, aspartate 583, lysine 585, and glutamate 590 each coordinate Ca(2+). Positions 606-625 (QDENIRRRSTGRPSVAKTAT) are disordered.

Belongs to the PPP phosphatase family. Requires Mn(2+) as cofactor. Expressed in the visual system of the fly, as well as in the mushroom bodies of the central brain.

It catalyses the reaction O-phospho-L-seryl-[protein] + H2O = L-seryl-[protein] + phosphate. The catalysed reaction is O-phospho-L-threonyl-[protein] + H2O = L-threonyl-[protein] + phosphate. In terms of biological role, phosphatase required to prevent light-induced retinal degeneration. The protein is Serine/threonine-protein phosphatase rdgC (rdgC) of Drosophila melanogaster (Fruit fly).